The primary structure comprises 430 residues: MEKVLIKHLGNYAGQEVLIKGWLYNKRSSGKICFLIVRDGTGLVQGVVEKKAAGEDLFSLAGNITQESSLMLRGTVREEPRAPGGFEIQVTGLEIVHMAEPYPISLKEHGVDFLAERRHLWIRTPRQSAILRIRSELEKGCRDFFEERDFVLADAPIITPTACEGTTNLFEIDYHGEKAYLSQSGQLYNEATAMALGRVYCFGPTFRAEKSKTRRHLMEFWMVEAEAAFFDFEDNIRLQEELVSYLVRRVLENNKKELELLRRDTGRLTGVTPPFPRMSYTDAVDFLNSKGVDFKWGDDFGAPHETMISEHFGLPVFIHRFPVDIKAFYMKPDPENPDVVLGADLLAPEGYGEIIGGGQRIDELELLKKRLVQHKLPEEAFEWYLDLRRYGSVPHSGFGLGLERLLAWICGIEHIREAIPFPRMLYRMCP.

This sequence belongs to the class-II aminoacyl-tRNA synthetase family. As to quaternary structure, homodimer.

It is found in the cytoplasm. The catalysed reaction is tRNA(Asn) + L-asparagine + ATP = L-asparaginyl-tRNA(Asn) + AMP + diphosphate + H(+). This Pelotomaculum thermopropionicum (strain DSM 13744 / JCM 10971 / SI) protein is Asparagine--tRNA ligase.